The following is a 563-amino-acid chain: Arginine--tRNA ligase (563 aa).

A 'HIGH' region motif is present at residues 121–131 (PNIAKPFSIGH).

It belongs to the class-I aminoacyl-tRNA synthetase family. In terms of assembly, monomer.

Its subcellular location is the cytoplasm. It carries out the reaction tRNA(Arg) + L-arginine + ATP = L-arginyl-tRNA(Arg) + AMP + diphosphate. The sequence is that of Arginine--tRNA ligase from Streptococcus agalactiae serotype III (strain NEM316).